Consider the following 198-residue polypeptide: Pyridoxal 5'-phosphate synthase subunit PdxT (198 aa).

49 to 51 (GES) provides a ligand contact to L-glutamine. The Nucleophile role is filled by Cys81. L-glutamine-binding positions include Arg113 and 141-142 (IR). Catalysis depends on charge relay system residues His177 and Glu179.

It belongs to the glutaminase PdxT/SNO family. In terms of assembly, in the presence of PdxS, forms a dodecamer of heterodimers. Only shows activity in the heterodimer.

It carries out the reaction aldehydo-D-ribose 5-phosphate + D-glyceraldehyde 3-phosphate + L-glutamine = pyridoxal 5'-phosphate + L-glutamate + phosphate + 3 H2O + H(+). The enzyme catalyses L-glutamine + H2O = L-glutamate + NH4(+). The protein operates within cofactor biosynthesis; pyridoxal 5'-phosphate biosynthesis. Its function is as follows. Catalyzes the hydrolysis of glutamine to glutamate and ammonia as part of the biosynthesis of pyridoxal 5'-phosphate. The resulting ammonia molecule is channeled to the active site of PdxS. In Mycobacterium tuberculosis (strain ATCC 25177 / H37Ra), this protein is Pyridoxal 5'-phosphate synthase subunit PdxT.